Consider the following 419-residue polypeptide: MHTINSDLRNTDPDISFLINQELLRQQTHLELIASENFASEAVMEAQGSVLTNKYAEGLPNKRYYGGCEHIDAIEQLAITRAQTLFNAEWANVQPHSGAQANFAVFLALLNPGDTIMGMDLSHGGHLTHGSPVNVSGKWFNAIHYGVDQTTKVLNFEQIRQVALKNRPKLIICGFSAYPRTIDFKAFRSIADEIDAYLLADIAHIAGLVACGAHPNPVPYCDVVTTTTHKTLRGPRGGLILCRDKEFGKRFDKAVFPGNQGGPLEHVIAAKAVAFGEALKPEFKTYTFQVISNAKALAKRIQERGISIVSEGTDNHIVLLDLRSIEMTGKKADSLISEVNITANKNTVPFDPESPFVTSGLRLGTAALTTRGFTEKAFIEVADVIADCLLNPEDLSIKEQCKAKVIDLCNRFPLYNSNQ.

(6S)-5,6,7,8-tetrahydrofolate is bound by residues Leu121 and 125 to 127 (GHL). Residue Lys230 is modified to N6-(pyridoxal phosphate)lysine. 354-356 (SPF) is a binding site for (6S)-5,6,7,8-tetrahydrofolate.

The protein belongs to the SHMT family. In terms of assembly, homodimer. Pyridoxal 5'-phosphate serves as cofactor.

Its subcellular location is the cytoplasm. The catalysed reaction is (6R)-5,10-methylene-5,6,7,8-tetrahydrofolate + glycine + H2O = (6S)-5,6,7,8-tetrahydrofolate + L-serine. The protein operates within one-carbon metabolism; tetrahydrofolate interconversion. It functions in the pathway amino-acid biosynthesis; glycine biosynthesis; glycine from L-serine: step 1/1. Its function is as follows. Catalyzes the reversible interconversion of serine and glycine with tetrahydrofolate (THF) serving as the one-carbon carrier. This reaction serves as the major source of one-carbon groups required for the biosynthesis of purines, thymidylate, methionine, and other important biomolecules. Also exhibits THF-independent aldolase activity toward beta-hydroxyamino acids, producing glycine and aldehydes, via a retro-aldol mechanism. The sequence is that of Serine hydroxymethyltransferase from Prochlorococcus marinus (strain SARG / CCMP1375 / SS120).